Reading from the N-terminus, the 729-residue chain is Fatty acid oxidation complex subunit alpha (729 aa).

Residues 1-189 (MLYKGDTLYL…KIGLVDGVVK (189 aa)) are enoyl-CoA hydratase/isomerase. D296 contacts substrate. Residues 311–729 (ETPKQAAVLG…ARPVGDLKTA (419 aa)) form a 3-hydroxyacyl-CoA dehydrogenase region. NAD(+) contacts are provided by residues M324, D343, 400–402 (VVE), K407, and S429. The active-site For 3-hydroxyacyl-CoA dehydrogenase activity is H450. Residue N453 participates in NAD(+) binding. The substrate site is built by N500 and Y660. The segment at 708–729 (RHNEPYYPPVEPARPVGDLKTA) is disordered.

The protein in the N-terminal section; belongs to the enoyl-CoA hydratase/isomerase family. In the C-terminal section; belongs to the 3-hydroxyacyl-CoA dehydrogenase family. In terms of assembly, heterotetramer of two alpha chains (FadB) and two beta chains (FadA).

It carries out the reaction a (3S)-3-hydroxyacyl-CoA + NAD(+) = a 3-oxoacyl-CoA + NADH + H(+). The catalysed reaction is a (3S)-3-hydroxyacyl-CoA = a (2E)-enoyl-CoA + H2O. It catalyses the reaction a 4-saturated-(3S)-3-hydroxyacyl-CoA = a (3E)-enoyl-CoA + H2O. The enzyme catalyses (3S)-3-hydroxybutanoyl-CoA = (3R)-3-hydroxybutanoyl-CoA. It carries out the reaction a (3Z)-enoyl-CoA = a 4-saturated (2E)-enoyl-CoA. The catalysed reaction is a (3E)-enoyl-CoA = a 4-saturated (2E)-enoyl-CoA. The protein operates within lipid metabolism; fatty acid beta-oxidation. Its function is as follows. Involved in the aerobic and anaerobic degradation of long-chain fatty acids via beta-oxidation cycle. Catalyzes the formation of 3-oxoacyl-CoA from enoyl-CoA via L-3-hydroxyacyl-CoA. It can also use D-3-hydroxyacyl-CoA and cis-3-enoyl-CoA as substrate. In Escherichia coli (strain SMS-3-5 / SECEC), this protein is Fatty acid oxidation complex subunit alpha.